Here is a 70-residue protein sequence, read N- to C-terminus: Cytochrome c oxidase subunit 8B, mitochondrial (70 aa).

The N-terminal 24 residues, 1-24 (MSRLAPPLRLLQAPLKCWAVPKAH), are a transit peptide targeting the mitochondrion. Topologically, residues 25–35 (VSAKPARTPTS) are mitochondrial matrix. Residues 36–59 (PMEQAVGLSVMFVSFLVPSGWVLS) traverse the membrane as a helical segment. At 60-70 (HLESYKKSSTT) the chain is on the mitochondrial intermembrane side.

The protein belongs to the cytochrome c oxidase VIII family. Component of the cytochrome c oxidase (complex IV, CIV), a multisubunit enzyme composed of 14 subunits. The complex is composed of a catalytic core of 3 subunits MT-CO1, MT-CO2 and MT-CO3, encoded in the mitochondrial DNA, and 11 supernumerary subunits COX4I, COX5A, COX5B, COX6A, COX6B, COX6C, COX7A, COX7B, COX7C, COX8 and NDUFA4, which are encoded in the nuclear genome. The complex exists as a monomer or a dimer and forms supercomplexes (SCs) in the inner mitochondrial membrane with NADH-ubiquinone oxidoreductase (complex I, CI) and ubiquinol-cytochrome c oxidoreductase (cytochrome b-c1 complex, complex III, CIII), resulting in different assemblies (supercomplex SCI(1)III(2)IV(1) and megacomplex MCI(2)III(2)IV(2)).

The protein resides in the mitochondrion inner membrane. Its pathway is energy metabolism; oxidative phosphorylation. Functionally, component of the cytochrome c oxidase, the last enzyme in the mitochondrial electron transport chain which drives oxidative phosphorylation. The respiratory chain contains 3 multisubunit complexes succinate dehydrogenase (complex II, CII), ubiquinol-cytochrome c oxidoreductase (cytochrome b-c1 complex, complex III, CIII) and cytochrome c oxidase (complex IV, CIV), that cooperate to transfer electrons derived from NADH and succinate to molecular oxygen, creating an electrochemical gradient over the inner membrane that drives transmembrane transport and the ATP synthase. Cytochrome c oxidase is the component of the respiratory chain that catalyzes the reduction of oxygen to water. Electrons originating from reduced cytochrome c in the intermembrane space (IMS) are transferred via the dinuclear copper A center (CU(A)) of subunit 2 and heme A of subunit 1 to the active site in subunit 1, a binuclear center (BNC) formed by heme A3 and copper B (CU(B)). The BNC reduces molecular oxygen to 2 water molecules using 4 electrons from cytochrome c in the IMS and 4 protons from the mitochondrial matrix. The polypeptide is Cytochrome c oxidase subunit 8B, mitochondrial (COX8B) (Carlito syrichta (Philippine tarsier)).